Consider the following 315-residue polypeptide: Pantothenate kinase (315 aa).

ATP is bound at residue 94–101 (GSVAVGKS).

Belongs to the prokaryotic pantothenate kinase family.

It localises to the cytoplasm. The enzyme catalyses (R)-pantothenate + ATP = (R)-4'-phosphopantothenate + ADP + H(+). It participates in cofactor biosynthesis; coenzyme A biosynthesis; CoA from (R)-pantothenate: step 1/5. This is Pantothenate kinase from Shewanella amazonensis (strain ATCC BAA-1098 / SB2B).